We begin with the raw amino-acid sequence, 675 residues long: Anosmin-1 (675 aa).

An N-terminal signal peptide occupies residues 1 to 21; it reads MVRRAPGASLALLLWVTAVSG. Intrachain disulfides connect cysteine 43/cysteine 77, cysteine 47/cysteine 71, cysteine 80/cysteine 99, cysteine 84/cysteine 95, and cysteine 110/cysteine 114. A glycan (N-linked (GlcNAc...) asparagine) is linked at asparagine 65. The region spanning 121-170 is the WAP domain; the sequence is LSVKQGDCPAPEKASGFAAACVESCEADSECSGVKKCCSNGCGHTCQVPK. Fibronectin type-III domains follow at residues 180–281, 286–392, 418–515, and 545–652; these read PRKE…SKDP, APSN…TAQD, RRKP…FFVT, and KPEN…DLPP. N-linked (GlcNAc...) asparagine glycans are attached at residues asparagine 203 and asparagine 294. Over residues 388 to 402 the composition is skewed to polar residues; the sequence is STAQDNRNNNEQTSA. The tract at residues 388–413 is disordered; the sequence is STAQDNRNNNEQTSAGKPPKGLVDPY. 3 N-linked (GlcNAc...) asparagine glycosylation sites follow: asparagine 465, asparagine 548, and asparagine 559. The interval 654–675 is disordered; it reads LPHRPHLKQHHPHHYKPPPEKY. The span at 656 to 669 shows a compositional bias: basic residues; the sequence is HRPHLKQHHPHHYK.

In terms of tissue distribution, mainly expressed in neurons of the central nervous system during the second half of embryonic life. Expressed in mitral neurons of the olfactory bulbs, striatal neurons, Purkinje cells of the cerebellum, retinal neurons and neurons of the brainstem and spinal cord.

The protein resides in the cell surface. May be an adhesion-like molecule with anti-protease activity. The sequence is that of Anosmin-1 from Gallus gallus (Chicken).